The primary structure comprises 337 residues: Manganese-dependent ADP-ribose/CDP-alcohol diphosphatase (337 aa).

An N-acetylmethionine modification is found at Met-1. The Zn(2+) site is built by Asp-25, Gln-27, Asp-74, Asn-110, His-241, His-278, and His-280.

It belongs to the ADPRibase-Mn family. In terms of assembly, monomer. Mg(2+) serves as cofactor.

It catalyses the reaction CDP-choline + H2O = phosphocholine + CMP + 2 H(+). The catalysed reaction is ADP-D-ribose + H2O = D-ribose 5-phosphate + AMP + 2 H(+). It carries out the reaction CDP-glycerol + H2O = sn-glycerol 3-phosphate + CMP + 2 H(+). In terms of biological role, hydrolyzes ADP-ribose, IDP-ribose, CDP-glycerol, CDP-choline and CDP-ethanolamine, but not other non-reducing ADP-sugars or CDP-glucose. May be involved in immune cell signaling as suggested by the second-messenger role of ADP-ribose, which activates TRPM2 as a mediator of oxidative/nitrosative stress. The protein is Manganese-dependent ADP-ribose/CDP-alcohol diphosphatase (ADPRM) of Bos taurus (Bovine).